We begin with the raw amino-acid sequence, 553 residues long: Protein PNS1 (553 aa).

Positions 1 to 17 (MYGKSGPPPEGYVPQHP) are enriched in pro residues. The tract at residues 1–49 (MYGKSGPPPEGYVPQHPPAQGYAPHNPPPGYVHENPFQEPVPQGQEYSP) is disordered. Residues 1–95 (MYGKSGPPPE…AGNRLKFNDW (95 aa)) lie on the Cytoplasmic side of the membrane. The chain crosses the membrane as a helical span at residues 96–116 (PFTIIFLLTVGAFIAVAVLTL). Residues 117-143 (RGWSLSPTSNGSGIYDGDNTHTLNTNA) are Extracellular-facing. A glycan (N-linked (GlcNAc...) asparagine) is linked at Asn126. The helical transmembrane segment at 144–164 (AILLLISCGVAVALSVFGLVL) threads the bilayer. Residues 165 to 170 (AGMYTK) lie on the Cytoplasmic side of the membrane. Residues 171-191 (FFIYAAMILNTVVGLGTAITY) traverse the membrane as a helical segment. Residues 192–196 (LVLRH) are Extracellular-facing. Residues 197-217 (WSAGIVFMIFTILTAVCYWLM) traverse the membrane as a helical segment. At 218–243 (RSRIPFSVAVLRTVMSVMKKHPQTWL) the chain is on the cytoplasmic side. The chain crosses the membrane as a helical span at residues 244–264 (VSLLGTIVSAAFSVIFSVVLV). The Extracellular portion of the chain corresponds to 265–288 (ATYIKYDPKSENGGCDVSGGSCSR). A helical membrane pass occupies residues 289-309 (GKLIGILVLVFFCGFYISEVI). Over 310–346 (RNVIHCTIAGIYGCWYYFSKSDQGMPRWPAFGSLKRA) the chain is Cytoplasmic. Residues 347–367 (LTTSFGSICFGSLIVSLIQLL) form a helical membrane-spanning segment. At 368–385 (RQIIQLLRNGIISGISDS) the chain is on the extracellular side. The chain crosses the membrane as a helical span at residues 386–406 (GWMQCLWLILDAVVGVFEWMA). Residues 407–450 (EYFNHYAYCFIALYGKPYLRAAKETWHMLREKGIDALINDNLIN) are Cytoplasmic-facing. A helical membrane pass occupies residues 451–471 (LALGFYTLFVGYTTALFSYLF). The Extracellular segment spans residues 472 to 483 (LRFTKPDYNSGG). The chain crosses the membrane as a helical span at residues 484 to 504 (GFNAVLMAFSFLIAIQLTHVA). Over 505 to 553 (TETIRSGTATFFVALGNDPEIFRVSYPQRFDEIFRAYPDVLNKLSHQHV) the chain is Cytoplasmic.

Belongs to the CTL (choline transporter-like) family.

It is found in the cell membrane. In terms of biological role, probably involved in transport through the plasma membrane. This is Protein PNS1 (PNS1) from Eremothecium gossypii (strain ATCC 10895 / CBS 109.51 / FGSC 9923 / NRRL Y-1056) (Yeast).